We begin with the raw amino-acid sequence, 94 residues long: Putative regulatory protein THA_332 (94 aa).

This sequence belongs to the RemA family.

The sequence is that of Putative regulatory protein THA_332 from Thermosipho africanus (strain TCF52B).